A 108-amino-acid chain; its full sequence is UPF0145 protein Patl_2194 (108 aa).

The protein belongs to the UPF0145 family.

The protein is UPF0145 protein Patl_2194 of Pseudoalteromonas atlantica (strain T6c / ATCC BAA-1087).